The following is a 125-amino-acid chain: Large-conductance mechanosensitive channel (125 aa).

Transmembrane regions (helical) follow at residues 14–34 (VIDL…VQSL) and 67–87 (GSFL…FLIV).

It belongs to the MscL family. Homopentamer.

The protein localises to the cell membrane. Channel that opens in response to stretch forces in the membrane lipid bilayer. May participate in the regulation of osmotic pressure changes within the cell. The chain is Large-conductance mechanosensitive channel from Lactobacillus helveticus (strain DPC 4571).